The primary structure comprises 98 residues: NADH-ubiquinone oxidoreductase chain 4L (98 aa).

Transmembrane regions (helical) follow at residues 1–21 (MTTM…GVYI), 29–49 (TLLC…LTLL), and 59–79 (FPLI…ALLV).

This sequence belongs to the complex I subunit 4L family. As to quaternary structure, core subunit of respiratory chain NADH dehydrogenase (Complex I) which is composed of 45 different subunits.

Its subcellular location is the mitochondrion inner membrane. It catalyses the reaction a ubiquinone + NADH + 5 H(+)(in) = a ubiquinol + NAD(+) + 4 H(+)(out). Its function is as follows. Core subunit of the mitochondrial membrane respiratory chain NADH dehydrogenase (Complex I) which catalyzes electron transfer from NADH through the respiratory chain, using ubiquinone as an electron acceptor. Part of the enzyme membrane arm which is embedded in the lipid bilayer and involved in proton translocation. The polypeptide is NADH-ubiquinone oxidoreductase chain 4L (MT-ND4L) (Zaglossus bruijni (Western long-beaked echidna)).